The primary structure comprises 520 residues: Probable helicase MJECL08 (520 aa).

ATP is bound by residues Arg-162, 171–176 (GAGKSN), and 501–502 (KI).

The protein belongs to the HerA family.

The catalysed reaction is Couples ATP hydrolysis with the unwinding of duplex DNA at the replication fork by translocating in the 5'-3' direction. This creates two antiparallel DNA single strands (ssDNA). The leading ssDNA polymer is the template for DNA polymerase III holoenzyme which synthesizes a continuous strand.. The enzyme catalyses ATP + H2O = ADP + phosphate + H(+). It carries out the reaction Couples ATP hydrolysis with the unwinding of duplex DNA by translocating in the 3'-5' direction.. Its function is as follows. A probably bidirectional DNA helicase. The protein is Probable helicase MJECL08 of Methanocaldococcus jannaschii (strain ATCC 43067 / DSM 2661 / JAL-1 / JCM 10045 / NBRC 100440) (Methanococcus jannaschii).